Here is a 621-residue protein sequence, read N- to C-terminus: UvrABC system protein C (621 aa).

Residues T11–I90 enclose the GIY-YIG domain. The region spanning K200–T235 is the UVR domain.

Belongs to the UvrC family. Interacts with UvrB in an incision complex.

Its subcellular location is the cytoplasm. The UvrABC repair system catalyzes the recognition and processing of DNA lesions. UvrC both incises the 5' and 3' sides of the lesion. The N-terminal half is responsible for the 3' incision and the C-terminal half is responsible for the 5' incision. The polypeptide is UvrABC system protein C (Lawsonia intracellularis (strain PHE/MN1-00)).